A 265-amino-acid chain; its full sequence is ClpXP adapter protein SpxH (265 aa).

This sequence belongs to the SpxH family. Interacts with Spx.

Its subcellular location is the cytoplasm. Adapter protein required for efficient degradation of Spx by ClpXP under non-stress conditions. Interaction with Spx stabilizes Spx and exposes the C-terminus of Spx for recognition and proteolysis by ClpXP. The chain is ClpXP adapter protein SpxH from Staphylococcus epidermidis (strain ATCC 35984 / DSM 28319 / BCRC 17069 / CCUG 31568 / BM 3577 / RP62A).